The following is a 270-amino-acid chain: MTILFVTMVISYFSCMRAAPMREIPGVQGGHRAEGYLGAAAAAAAAITSGSRGHGTPQSGGGLPWLTDTFEQVIEELLEVEGEATQQLGPGADQGQGGGGPAAMADSKDVDMYASRVMISNQVPLEPPLLFLLEEYKNYLDAANMSMRVRRHSDPARRGELSVCDSISQWVTALDKKTAIDMSGQTVTVLEKVPVTNGQLKQYFYETKCNPLGYTKEGCRGIDKRHYNSQCRTTQSYVRALTMDSKRKIGWRFIRIDTSCVCTLTIKRGR.

An N-terminal signal peptide occupies residues 1–18 (MTILFVTMVISYFSCMRA). Residues 19–151 (APMREIPGVQ…AANMSMRVRR (133 aa)) constitute a propeptide that is removed on maturation. An N-linked (GlcNAc...) asparagine glycan is attached at Asn144. 3 cysteine pairs are disulfide-bonded: Cys164/Cys231, Cys209/Cys260, and Cys219/Cys262.

The protein belongs to the NGF-beta family.

The protein resides in the secreted. Functionally, promotes the survival of neuronal populations that are all located either in the central nervous system or directly connected to it. This is Neurotrophic factor BDNF precursor form (bdnf) from Cyprinus carpio (Common carp).